The chain runs to 249 residues: NADH dehydrogenase [ubiquinone] flavoprotein 2, mitochondrial (249 aa).

The transit peptide at 1–32 (MFFSAALRARAAGLTAHWGRHVRNLHKTAKQN) directs the protein to the mitochondrion. Position 61 is an N6-acetyllysine (Lys61). Cys135, Cys140, Cys176, and Cys180 together coordinate [2Fe-2S] cluster. Tyr193 carries the phosphotyrosine; by SRC modification. The interval 213 to 249 (IPKPGPRSGRFSCEPAGGLTSLTEPPKGPGFGVQAGL) is disordered.

The protein belongs to the complex I 24 kDa subunit family. Core subunit of respiratory chain NADH dehydrogenase (Complex I) which is composed of 45 different subunits. This is a component of the flavoprotein-sulfur (FP) fragment of the enzyme. The cofactor is [2Fe-2S] cluster.

Its subcellular location is the mitochondrion inner membrane. The catalysed reaction is a ubiquinone + NADH + 5 H(+)(in) = a ubiquinol + NAD(+) + 4 H(+)(out). Its function is as follows. Core subunit of the mitochondrial membrane respiratory chain NADH dehydrogenase (Complex I) which catalyzes electron transfer from NADH through the respiratory chain, using ubiquinone as an electron acceptor. Parts of the peripheral arm of the enzyme, where the electrons from NADH are accepted by flavin mononucleotide (FMN) and then passed along a chain of iron-sulfur clusters by electron tunnelling to the final acceptor ubiquinone. Contains one iron-sulfur cluster. The polypeptide is NADH dehydrogenase [ubiquinone] flavoprotein 2, mitochondrial (Pan troglodytes (Chimpanzee)).